Reading from the N-terminus, the 718-residue chain is Mitochondrial potassium channel ATP-binding subunit (718 aa).

The transit peptide at 1–25 (MLVHLFRVGIRGGPFPGRLLPPLRF) directs the protein to the mitochondrion. 3 helical membrane-spanning segments follow: residues 128 to 148 (LLVLGVAVVLALGAALVNVQI), 179 to 199 (THLLILYGVQGLLTFGYLVLL), and 279 to 299 (LLLMLATPALMGVGTLMGSGL). Residues 133–420 (VAVVLALGAA…LSVLFGQVVR (288 aa)) form the ABC transmembrane type-1 domain. Positions 455 to 692 (VTFQNVCFSY…GGLYAELIRR (238 aa)) constitute an ABC transporter domain. ATP is bound at residue 490-497 (GQSGGGKT). The segment at 697–718 (APRTAAPLPKKPEGPRNHQHKS) is disordered.

It belongs to the ABC transporter superfamily. ABCB family. Multidrug resistance exporter (TC 3.A.1.201) subfamily. In terms of assembly, the mitochondrial potassium channel (mitoK(ATP)) is composed of 4 subunits of CCDC51/MITOK and 4 subunits of ABCB8/MITOSUR. Physically interacts with PAAT. Interacts with Neuropilin-1 (NRP1) in mitochondria.

The protein resides in the mitochondrion inner membrane. With respect to regulation, channel activity inhibited by ATP via ABCB8/MITOSUR subunit. ATP-binding subunit of the mitochondrial ATP-gated potassium channel (mitoK(ATP)). Together with pore-forming subunit CCDC51/MITOK of the mitoK(ATP) channel, mediates ATP-dependent potassium currents across the mitochondrial inner membrane. An increase in ATP intracellular levels closes the channel, inhibiting K(+) transport, whereas a decrease in ATP levels enhances K(+) uptake in the mitochondrial matrix. Plays a role in mitochondrial iron transport. Required for maintenance of normal cardiac function, possibly by influencing mitochondrial iron export and regulating the maturation of cytosolic iron sulfur cluster-containing enzymes. This is Mitochondrial potassium channel ATP-binding subunit (ABCB8) from Pongo abelii (Sumatran orangutan).